A 251-amino-acid polypeptide reads, in one-letter code: 5'-nucleotidase SurE (251 aa).

Residues D8, D9, S39, and N91 each contribute to the a divalent metal cation site.

The protein belongs to the SurE nucleotidase family. The cofactor is a divalent metal cation.

Its subcellular location is the cytoplasm. The enzyme catalyses a ribonucleoside 5'-phosphate + H2O = a ribonucleoside + phosphate. Functionally, nucleotidase that shows phosphatase activity on nucleoside 5'-monophosphates. The chain is 5'-nucleotidase SurE from Nitrosococcus oceani (strain ATCC 19707 / BCRC 17464 / JCM 30415 / NCIMB 11848 / C-107).